Reading from the N-terminus, the 362-residue chain is Chorismate synthase (362 aa).

Residues R48 and R54 each coordinate NADP(+). Residues R131–S133, N243–A244, G287, K302–S306, and R328 contribute to the FMN site.

The protein belongs to the chorismate synthase family. In terms of assembly, homotetramer. It depends on FMNH2 as a cofactor.

The enzyme catalyses 5-O-(1-carboxyvinyl)-3-phosphoshikimate = chorismate + phosphate. It participates in metabolic intermediate biosynthesis; chorismate biosynthesis; chorismate from D-erythrose 4-phosphate and phosphoenolpyruvate: step 7/7. Catalyzes the anti-1,4-elimination of the C-3 phosphate and the C-6 proR hydrogen from 5-enolpyruvylshikimate-3-phosphate (EPSP) to yield chorismate, which is the branch point compound that serves as the starting substrate for the three terminal pathways of aromatic amino acid biosynthesis. This reaction introduces a second double bond into the aromatic ring system. The chain is Chorismate synthase from Bradyrhizobium diazoefficiens (strain JCM 10833 / BCRC 13528 / IAM 13628 / NBRC 14792 / USDA 110).